Consider the following 103-residue polypeptide: Large ribosomal subunit protein bL21 (103 aa).

This sequence belongs to the bacterial ribosomal protein bL21 family. As to quaternary structure, part of the 50S ribosomal subunit. Contacts protein L20.

In terms of biological role, this protein binds to 23S rRNA in the presence of protein L20. The protein is Large ribosomal subunit protein bL21 of Nocardia farcinica (strain IFM 10152).